A 518-amino-acid polypeptide reads, in one-letter code: Voltage-gated potassium channel regulatory subunit KCNG2 (518 aa).

Topologically, residues 1-214 are cytoplasmic; that stretch reads MALLTGNADR…DMVENPHSGI (214 aa). The helical transmembrane segment at 215–236 threads the bilayer; that stretch reads PGKIFACISISFVAITAVSLCI. The Extracellular segment spans residues 237-257; the sequence is STMPDVREEEDRGECSQKCYD. Residues 258 to 279 form a helical membrane-spanning segment; it reads IFVLETVCVAWFSFEFLLRSIQ. Over 280 to 290 the chain is Cytoplasmic; the sequence is AENKCAFLKTP. A helical transmembrane segment spans residues 291-311; that stretch reads LNIIDILAILPFYISLIVDMA. The Extracellular portion of the chain corresponds to 312 to 331; it reads STKNSSKPGGGAGNKYLERV. Residues 332 to 352 traverse the membrane as a helical; Voltage-sensor segment; the sequence is GLVLRFLRALRILYVMRLARH. At 353–367 the chain is on the cytoplasmic side; the sequence is SLGLQTLGLTVRRCT. Residues 368–389 traverse the membrane as a helical segment; that stretch reads REFGLLLLFLCVAMALFSPLVY. Topologically, residues 390-404 are extracellular; that stretch reads LAESELGAKQEFTSI. Positions 405 to 416 form an intramembrane region, helical; sequence PTSYWWAVISMT. The Selectivity filter motif lies at 417-422; it reads TVGYGD. The stretch at 417–424 is an intramembrane region; sequence TVGYGDMV. The Extracellular segment spans residues 425–431; it reads PRSIPGQ. Residues 432 to 460 traverse the membrane as a helical segment; that stretch reads VVALSSILSGILLMAFPVTSIFHTFSRSY. Topologically, residues 461-518 are cytoplasmic; that stretch reads SELKEQQQRAASRQMHQLEESTKLAGGGSSQWITAASPPDAAREDGRPELDQEAKRSC. A disordered region spans residues 473 to 518; the sequence is RQMHQLEESTKLAGGGSSQWITAASPPDAAREDGRPELDQEAKRSC. Basic and acidic residues predominate over residues 501-518; the sequence is AAREDGRPELDQEAKRSC.

The protein belongs to the potassium channel family. G (TC 1.A.1.2) subfamily. Kv6.2/KCNG2 sub-subfamily. As to quaternary structure, heterodimer with KCNB1.

Its subcellular location is the cell membrane. In terms of biological role, regulatory alpha-subunit of the voltage-gated potassium (Kv) channel which, when coassembled with KCNB1, can modulate the kinetics and conductance-voltage relationship. Modulates channel activity by shifting the threshold and the half-maximal activation to more negative values. Potassium channel subunit that does not form functional channels by itself. The chain is Voltage-gated potassium channel regulatory subunit KCNG2 from Gallus gallus (Chicken).